We begin with the raw amino-acid sequence, 100 residues long: HssA/B-like protein 37 (100 aa).

Disordered regions lie at residues 1–29 (MTLF…SGTS) and 67–100 (RSRG…CCGI). Residues 71–93 (SCGGNRGNGNGNGGMGGGNGSCC) show a composition bias toward gly residues.

It belongs to the hssA/B family.

The chain is HssA/B-like protein 37 (hssl37) from Dictyostelium discoideum (Social amoeba).